The chain runs to 293 residues: MDGVIVIDKPEGWTSHDVVNKVRRIAKTKKVGHLGTLDPIATGVLPLVIERATRLAQFYTRSEKIYEGLVRFGWSTSSYDRAGEPTSEKVEVQLTAEQLEHALENFRGEFLQRPPAVSAKKVEGKRSYELARKNMAVELEPVKVHVYELTLLALEGNLARLRAHCSGGTYMRSIAHDLGQALGCGAHLQELRRLASGEFELDQARTLEQLESLAAEDRLPDAIVPAGKLLPAFPSVFVDEITAAQIRNGRDFPASPFRSQPASKYVKAVTRTGDLVAIGEVVLPNLYHPTVVM.

Asp38 functions as the Nucleophile in the catalytic mechanism.

Belongs to the pseudouridine synthase TruB family. Type 1 subfamily.

It catalyses the reaction uridine(55) in tRNA = pseudouridine(55) in tRNA. Responsible for synthesis of pseudouridine from uracil-55 in the psi GC loop of transfer RNAs. The protein is tRNA pseudouridine synthase B of Solibacter usitatus (strain Ellin6076).